The following is a 323-amino-acid chain: Methionine adenosyltransferase 2 subunit beta (323 aa).

Residues 26-29, 49-51, 60-61, Cys-82, Arg-86, Tyr-146, and Leu-172 each bind NADP(+); these read TGLL, YNR, and NL. The segment at 308–323 is required for interaction with MAT2A; the sequence is LWPFQHDKRWRQTVFH.

This sequence belongs to the dTDP-4-dehydrorhamnose reductase family. MAT2B subfamily. In terms of assembly, heterotrimer; composed of a catalytic mat2a homodimer that binds one regulatory mat2b chain. Heterohexamer; composed of a central, catalytic mat2a homotetramer flanked on either side by a regulatory mat2b chain. NADP binding increases the affinity for mat2a.

The protein operates within amino-acid biosynthesis; S-adenosyl-L-methionine biosynthesis; S-adenosyl-L-methionine from L-methionine: step 1/1. Functionally, regulatory subunit of S-adenosylmethionine synthetase 2, an enzyme that catalyzes the formation of S-adenosylmethionine from methionine and ATP. Regulates MAT2A catalytic activity by changing its kinetic properties, increasing its affinity for L-methionine. Can bind NADP (in vitro). In Danio rerio (Zebrafish), this protein is Methionine adenosyltransferase 2 subunit beta (mat2b).